Here is a 273-residue protein sequence, read N- to C-terminus: Large ribosomal subunit protein uL2 (273 aa).

Positions 228 to 273 are disordered; that stretch reads VDHPHGGGEGKTSGGRHPVTPWGFPTKGKKTRKNKRTSKFIVKKRK. A compositionally biased stretch (basic residues) spans 254–273; that stretch reads KGKKTRKNKRTSKFIVKKRK.

This sequence belongs to the universal ribosomal protein uL2 family. As to quaternary structure, part of the 50S ribosomal subunit. Forms a bridge to the 30S subunit in the 70S ribosome.

In terms of biological role, one of the primary rRNA binding proteins. Required for association of the 30S and 50S subunits to form the 70S ribosome, for tRNA binding and peptide bond formation. It has been suggested to have peptidyltransferase activity; this is somewhat controversial. Makes several contacts with the 16S rRNA in the 70S ribosome. This chain is Large ribosomal subunit protein uL2, found in Rickettsia rickettsii (strain Iowa).